We begin with the raw amino-acid sequence, 341 residues long: Major histocompatibility complex class I-related protein 1 (341 aa).

A signal peptide spans 1–18 (MMLLLPLLAVFLVKRSHT). The alpha-1 stretch occupies residues 19–105 (RTHSLRYFRL…RHLQRHYNHS (87 aa)). The antigen-binding cleft stretch occupies residues 19–197 (RTHSLRYFRL…EYGRDTLERT (179 aa)). At 19–296 (RTHSLRYFRL…APRESGDILR (278 aa)) the chain is on the extracellular side. The 8-(9H-purin-6-yl)-2-oxa-8-azabicyclo[3.3.1]nona-3,6-diene-4,6-dicarbaldehyde site is built by Tyr-25 and Arg-27. 5-(2-oxoethylideneamino)-6-(D-ribitylamino)uracil is bound by residues Arg-27, Ser-42, and Lys-61. 5-(2-oxopropylideneamino)-6-(D-ribitylamino)uracil is bound by residues Arg-27, Ser-42, and Lys-61. Arg-27, Ser-42, and Lys-61 together coordinate 7-hydroxy-6-methyl-8-(1-D-ribityl)lumazine. 8-(9H-purin-6-yl)-2-oxa-8-azabicyclo[3.3.1]nona-3,6-diene-4,6-dicarbaldehyde-binding residues include Lys-61 and His-76. Lys-61 contributes to the 2-amino-4-oxopteridine-6-carbaldehyde binding site. Residue Lys-61 coordinates pyridoxal. N-linked (GlcNAc...) asparagine glycosylation is present at Asn-103. The alpha-2 stretch occupies residues 106-197 (GLHTYQRMIG…EYGRDTLERT (92 aa)). Arg-112 lines the 8-(9H-purin-6-yl)-2-oxa-8-azabicyclo[3.3.1]nona-3,6-diene-4,6-dicarbaldehyde pocket. The 5-(2-oxoethylideneamino)-6-(D-ribitylamino)uracil site is built by Arg-112, Tyr-170, and Gln-171. 5-(2-oxopropylideneamino)-6-(D-ribitylamino)uracil contacts are provided by Arg-112, Tyr-170, and Gln-171. Positions 112, 170, and 171 each coordinate 7-hydroxy-6-methyl-8-(1-D-ribityl)lumazine. 2 disulfide bridges follow: Cys-116-Cys-179 and Cys-218-Cys-274. The segment at 198–289 (EHPVVRTTRK…GRQMVLEAPR (92 aa)) is alpha-3. An Ig-like C1-type domain is found at 200–301 (PVVRTTRKET…GDILRVSTIS (102 aa)). The interval 290 to 296 (ESGDILR) is connecting peptide. A helical membrane pass occupies residues 297–317 (VSTISGTTILIIALAGVGVLI). Over 318-341 (WRRSQELKEVMYQPTQVNEGSSPS) the chain is Cytoplasmic.

The protein belongs to the MHC class I family. Heterotrimer that consists of MR1, B2M and metabolite antigen. Major classes of metabolite ligands presented by MR1 include riboflavin-related antigens, pyrimidines and ribityl lumazines, nucleobase adducts and folate derivatives. Forms reversible covalent Schiff base complexes with microbial pyrimidine-based metabolite, which serves as a molecular switch triggering complete folding, stable association with B2M and translocation of the ternary complex from endoplasmic reticulum to the plasma membrane. Alternatively, forms non-Schiff base complexes with ribityl lumazines. On antigen-presenting cells, the ternary complex interacts with TCR on MR1-restricted CD4- or CD8-positive T cell subsets. Interacts with TAPBP and TAPBPL chaperones in the endoplasmic reticulum. TAPBP associated or not with MHC class I peptide loading complex binds ligand-free MR1 or MR1-B2M complex, providing for stable MR1 pools ready for metabolite antigen processing. TAPBPL interacts with MR1 in a ligand-independent way; this interaction may stabilize MR1 pool and facilitate ligand loading and dissociation. Structurally, MR1-B2M heterodimer adopts a topology similar to classical MHC class I molecules, with alpha-1 and alpha-2 domains of MR1 forming the antigen-binding cleft composed of two alpha-helices resting on a floor of 7-stranded anti-parallel beta-pleated sheet. Post-translationally, N-glycosylated. Highly expressed thymus. Expressed in liver, kidney, spleen, heart, brain, lung, skeletal muscle and testis.

It is found in the cell membrane. Its subcellular location is the endoplasmic reticulum membrane. The protein resides in the golgi apparatus membrane. It localises to the early endosome membrane. The protein localises to the late endosome membrane. In terms of biological role, antigen-presenting molecule specialized in displaying microbial pyrimidine-based metabolites to alpha-beta T cell receptors (TCR) on innate-type mucosal-associated invariant T (MAIT) cells. In complex with B2M preferentially presents riboflavin-derived metabolites to semi-invariant TRAV1 TCRs on MAIT cells, guiding immune surveillance of the microbial metabolome at mucosal epithelial barriers. Signature pyrimidine-based microbial antigens are generated via non-enzymatic condensation of metabolite intermediates of the riboflavin pathway with by-products arising from other metabolic pathways such as glycolysis. Typical potent antigenic metabolites are 5-(2-oxoethylideneamino)-6-D-ribitylaminouracil (5-OE-RU) and 5-(2-oxopropylideneamino)-6-D-ribitylaminouracil (5-OP-RU), products of condensation of 5-amino-6-D-ribityaminouracil (5-A-RU) with glyoxal or methylglyoxal by-products, respectively. May present microbial antigens to various TRAV1-negative MAIT cell subsets, providing for unique recognition of diverse microbes, including pathogens that do not synthesize riboflavin. Upon antigen recognition, elicits rapid innate-type MAIT cell activation to eliminate pathogenic microbes by directly killing infected cells. During T cell development, drives thymic selection and post-thymic terminal differentiation of MAIT cells in a process dependent on commensal microflora. Acts as an immune sensor of cancer cell metabolome. May present a tumor-specific or -associated metabolite essential for cancer cell survival to a pan-cancer TCR on a non-MAIT CD8-positive T cell clone, triggering T cell-mediated killing of a wide range of cancer cell types. May present tumor-enriched pyridoxal and pyridoxal 5'-phosphate antigens, enabling preferential recognition of cancer cells. Presents nucleobase carbonyl adducts generated during oxidative stress. Captures M3Ade, a nucleobase adduct composed of one adenine modified by a malondialdehyde trimer, for recognition by MR1-restricted T cell clones expressing a polyclonal TCR repertoire. The polypeptide is Major histocompatibility complex class I-related protein 1 (Mus musculus (Mouse)).